Here is a 104-residue protein sequence, read N- to C-terminus: Hydrogen cyanide synthase subunit HcnA (104 aa).

Residues 16–97 (ADMTIHLNGQ…GMRVETESNR (82 aa)) form the 2Fe-2S ferredoxin-type domain. [2Fe-2S] cluster is bound by residues Cys60, Cys65, Cys68, and Cys81.

As to quaternary structure, heterotrimer of HcnA, HcnB and HcnC.

It localises to the cell membrane. It catalyses the reaction glycine + 2 A = hydrogen cyanide + 2 AH2 + CO2. Oxygen is necessary for cyanogenesis. Activated by succinate, glycine methyl ester, glucose and D,L-methionine in addition to glycine. Phenazine methosulfate, methylene blue, 2,6-dichlorophenolindophenol (DCIP) and ferricyanide can replace oxygen for the reaction. Inhibited by pyrrolnitrin and acriflavine at 1 mM concentration. Its function is as follows. A three-component membrane-bound flavoenzyme that catalyzes the formation of hydrogen cyanide, a secondary metabolite, by transfer of electrons to a cyanide-resistant branch of the aerobic respiratory chain. The polypeptide is Hydrogen cyanide synthase subunit HcnA (Pseudomonas aeruginosa (strain ATCC 15692 / DSM 22644 / CIP 104116 / JCM 14847 / LMG 12228 / 1C / PRS 101 / PAO1)).